A 538-amino-acid polypeptide reads, in one-letter code: Phosphatidylethanolamine transferase Mcr-2 (538 aa).

5 helical membrane-spanning segments follow: residues 14 to 34 (PFVLMGLVALFLAATANLTFF), 47 to 67 (LGFIISMAVAVMGAMLLIVVL), 72 to 92 (YVLKPVLILLLIMGAVTSYFT), 121 to 141 (LAFFVRIIGLGVLPSVLVAVA), and 161 to 181 (VSLVLLLVPIGLFSSQYASFF). Zn(2+) contacts are provided by E244 and T283. 3 cysteine pairs are disulfide-bonded: C279-C289, C354-C362, and C412-C420. A Phosphothreonine modification is found at T283. Positions 463 and 464 each coordinate Zn(2+).

It belongs to the phosphoethanolamine transferase family. Monomer. In terms of processing, phosphorylated at Thr-283; may represent an intermediate in the catalytic mechanism.

It localises to the cell inner membrane. It carries out the reaction lipid A (E. coli) + a 1,2-diacyl-sn-glycero-3-phosphoethanolamine + H(+) = lipid A 4'-(2-aminoethyl diphosphate) (E. coli) + a 1,2-diacyl-sn-glycerol. Its function is as follows. Probably catalyzes the addition of a phosphoethanolamine moiety to lipid A. Phosphoethanolamine modification of lipid A confers polymyxin resistance. Confers resistance to polymyxin-type antibiotics such as colistin. The protein is Phosphatidylethanolamine transferase Mcr-2 of Escherichia coli.